Here is a 312-residue protein sequence, read N- to C-terminus: Glycine--tRNA ligase alpha subunit (312 aa).

The protein belongs to the class-II aminoacyl-tRNA synthetase family. Tetramer of two alpha and two beta subunits.

Its subcellular location is the cytoplasm. It catalyses the reaction tRNA(Gly) + glycine + ATP = glycyl-tRNA(Gly) + AMP + diphosphate. The sequence is that of Glycine--tRNA ligase alpha subunit from Nostoc punctiforme (strain ATCC 29133 / PCC 73102).